A 358-amino-acid chain; its full sequence is Peptide chain release factor 1 (358 aa).

Position 233 is an N5-methylglutamine (Gln-233).

Belongs to the prokaryotic/mitochondrial release factor family. Methylated by PrmC. Methylation increases the termination efficiency of RF1.

Its subcellular location is the cytoplasm. In terms of biological role, peptide chain release factor 1 directs the termination of translation in response to the peptide chain termination codons UAG and UAA. This is Peptide chain release factor 1 from Blochmanniella floridana.